The sequence spans 424 residues: Methylthioribose-1-phosphate isomerase (424 aa).

Residue Asp-281 is the Proton donor of the active site.

Belongs to the eIF-2B alpha/beta/delta subunits family. MtnA subfamily.

The protein resides in the cytoplasm. It localises to the nucleus. It carries out the reaction 5-(methylsulfanyl)-alpha-D-ribose 1-phosphate = 5-(methylsulfanyl)-D-ribulose 1-phosphate. Its pathway is amino-acid biosynthesis; L-methionine biosynthesis via salvage pathway; L-methionine from S-methyl-5-thio-alpha-D-ribose 1-phosphate: step 1/6. Its function is as follows. Catalyzes the interconversion of methylthioribose-1-phosphate (MTR-1-P) into methylthioribulose-1-phosphate (MTRu-1-P). This chain is Methylthioribose-1-phosphate isomerase, found in Candida dubliniensis (strain CD36 / ATCC MYA-646 / CBS 7987 / NCPF 3949 / NRRL Y-17841) (Yeast).